A 368-amino-acid polypeptide reads, in one-letter code: Probable leucine aminopeptidase TRV_05750 (368 aa).

The signal sequence occupies residues 1–18 (MKVFAIAAVAALTAVAVA). N92 carries N-linked (GlcNAc...) asparagine glycosylation. Zn(2+) contacts are provided by H172 and D191. N-linked (GlcNAc...) asparagine glycans are attached at residues N192 and N216. Residues E230 and D257 each coordinate Zn(2+). C301 and C305 are joined by a disulfide. Residue H334 participates in Zn(2+) binding.

This sequence belongs to the peptidase M28 family. M28E subfamily. As to quaternary structure, monomer. Requires Zn(2+) as cofactor.

The protein localises to the secreted. Functionally, probable extracellular aminopeptidase which contributes to pathogenicity. In Trichophyton verrucosum (strain HKI 0517), this protein is Probable leucine aminopeptidase TRV_05750.